A 461-amino-acid chain; its full sequence is Bifunctional protein GlmU (461 aa).

The interval 1 to 232 (MNLQIIILAA…SFEVQGINNR (232 aa)) is pyrophosphorylase. UDP-N-acetyl-alpha-D-glucosamine-binding positions include 8-11 (LAAG), Lys22, Gln73, and 78-79 (GT). Asp102 provides a ligand contact to Mg(2+). UDP-N-acetyl-alpha-D-glucosamine is bound by residues Gly142, Glu157, and Asn230. Asn230 is a Mg(2+) binding site. The interval 233–253 (QQLQQLERIWQQRAANQLMEK) is linker. The tract at residues 254–461 (GATLADANRF…WKRPVKRERD (208 aa)) is N-acetyltransferase. Residues Arg336 and Lys354 each coordinate UDP-N-acetyl-alpha-D-glucosamine. Catalysis depends on His366, which acts as the Proton acceptor. Residues Tyr369 and Asn380 each contribute to the UDP-N-acetyl-alpha-D-glucosamine site. Residues Ala383, 389–390 (NY), Ser408, and Ala426 contribute to the acetyl-CoA site.

In the N-terminal section; belongs to the N-acetylglucosamine-1-phosphate uridyltransferase family. It in the C-terminal section; belongs to the transferase hexapeptide repeat family. Homotrimer. The cofactor is Mg(2+).

It localises to the cytoplasm. It catalyses the reaction alpha-D-glucosamine 1-phosphate + acetyl-CoA = N-acetyl-alpha-D-glucosamine 1-phosphate + CoA + H(+). It carries out the reaction N-acetyl-alpha-D-glucosamine 1-phosphate + UTP + H(+) = UDP-N-acetyl-alpha-D-glucosamine + diphosphate. It functions in the pathway nucleotide-sugar biosynthesis; UDP-N-acetyl-alpha-D-glucosamine biosynthesis; N-acetyl-alpha-D-glucosamine 1-phosphate from alpha-D-glucosamine 6-phosphate (route II): step 2/2. The protein operates within nucleotide-sugar biosynthesis; UDP-N-acetyl-alpha-D-glucosamine biosynthesis; UDP-N-acetyl-alpha-D-glucosamine from N-acetyl-alpha-D-glucosamine 1-phosphate: step 1/1. It participates in bacterial outer membrane biogenesis; LPS lipid A biosynthesis. Functionally, catalyzes the last two sequential reactions in the de novo biosynthetic pathway for UDP-N-acetylglucosamine (UDP-GlcNAc). The C-terminal domain catalyzes the transfer of acetyl group from acetyl coenzyme A to glucosamine-1-phosphate (GlcN-1-P) to produce N-acetylglucosamine-1-phosphate (GlcNAc-1-P), which is converted into UDP-GlcNAc by the transfer of uridine 5-monophosphate (from uridine 5-triphosphate), a reaction catalyzed by the N-terminal domain. In Legionella pneumophila subsp. pneumophila (strain Philadelphia 1 / ATCC 33152 / DSM 7513), this protein is Bifunctional protein GlmU.